Reading from the N-terminus, the 467-residue chain is Na(+)/H(+) exchange regulatory cofactor-like protein nrfl-1 (467 aa).

2 PDZ domains span residues 12-94 and 143-225; these read RLCV…ISEE and LAEL…ASED. The segment at 344–429 is disordered; the sequence is MSSHTEVLPP…ASSTSGYDDD (86 aa). Residues 407-425 show a composition bias toward polar residues; it reads PSPLSNGSSHGYAASSTSG.

Interacts (via PDZ 2 domain) with aat-6 (via PDZ-binding motif); the interaction sequesters aat-6 to the apical cell membrane of intestinal cells. Post-translationally, phosphorylated. Expressed in the excretory canal and intestine. Expressed on the apical cell membrane of intestinal cells (at protein level).

It is found in the cell projection. Its subcellular location is the microvillus membrane. It localises to the apical cell membrane. Scaffold protein that connects plasma membrane proteins with members of the ezrin/moesin/radixin family and thereby helps to link them to the actin cytoskeleton and to regulate their surface expression. Anchors the amino acid transporter protein aat-6 to the apical cell membrane of intestinal cells, particularly in older animals, in order to maintain amino acid homeostasis. May play a role in promoting fertility. The protein is Na(+)/H(+) exchange regulatory cofactor-like protein nrfl-1 of Caenorhabditis elegans.